The primary structure comprises 336 residues: Glutamyl endopeptidase (336 aa).

Positions 1-29 (MKGKFLKVSSLFVATLTTATLVSSPAANA) are cleaved as a signal peptide. Residues 30–68 (LSSKAMDNHPQQTQSSKQQTPKIQKGGNLKPLEQREHAN) constitute a propeptide that is removed on maturation. Residues 34 to 61 (AMDNHPQQTQSSKQQTPKIQKGGNLKPL) are disordered. Residues 39-51 (PQQTQSSKQQTPK) show a composition bias toward low complexity. Residues histidine 119, aspartate 161, and serine 237 each act as charge relay system in the active site. The disordered stretch occupies residues 283-336 (FANDDQPNNPDNPDNPNNPDNPNNPDEPNNPDNPNNPDNPDNGDNNNSDNPDAA). The segment covering 286-336 (DDQPNNPDNPDNPNNPDNPNNPDEPNNPDNPNNPDNPDNGDNNNSDNPDAA) has biased composition (low complexity). Repeat copies occupy residues 289-291 (PNN), 292-294 (PDN), 295-297 (PDN), 298-300 (PNN), 301-303 (PDN), 304-306 (PNN), 310-312 (PNN), 313-315 (PDN), 316-318 (PNN), 319-321 (PDN), and 322-324 (PDN). Residues 289 to 324 (PNNPDNPDNPNNPDNPNNPDEPNNPDNPNNPDNPDN) form an 11 X 3 AA repeats of P-[DN]-N region.

The protein belongs to the peptidase S1B family. Proteolytically cleaved by aureolysin (aur). This cleavage leads to the activation of SspA.

It localises to the secreted. The catalysed reaction is Preferential cleavage: Glu-|-Xaa, Asp-|-Xaa.. Functionally, preferentially cleaves peptide bonds on the carboxyl-terminal side of aspartate and glutamate. Along with other extracellular proteases it is involved in colonization and infection of human tissues. Required for proteolytic maturation of thiol protease SspB and inactivation of SspC, an inhibitor of SspB. It is the most important protease for degradation of fibronectin-binding protein (FnBP) and surface protein A, which are involved in adherence to host cells. May also protect bacteria against host defense mechanism by cleaving the immunoglobulin classes IgG, IgA and IgM. May be involved in the stability of secreted lipases. The protein is Glutamyl endopeptidase (sspA) of Staphylococcus aureus (strain NCTC 8325 / PS 47).